The sequence spans 72 residues: DNA gyrase inhibitor YacG (72 aa).

Zn(2+) is bound by residues cysteine 7, cysteine 10, cysteine 26, and cysteine 30. The tract at residues 44–72 (SIAGEEHTPSSDTARPQLSAEDLALLEQD) is disordered.

It belongs to the DNA gyrase inhibitor YacG family. As to quaternary structure, interacts with GyrB. The cofactor is Zn(2+).

Inhibits all the catalytic activities of DNA gyrase by preventing its interaction with DNA. Acts by binding directly to the C-terminal domain of GyrB, which probably disrupts DNA binding by the gyrase. In Tolumonas auensis (strain DSM 9187 / NBRC 110442 / TA 4), this protein is DNA gyrase inhibitor YacG.